Reading from the N-terminus, the 531-residue chain is Ceramide kinase (531 aa).

Residues Met1–Trp115 form an essential for enzyme activity region. The segment at Met1 to Ser125 is required for binding to sulfatide and phosphoinositides. The region spanning Ser128 to Asn278 is the DAGKc domain. Residues Asn138–Phe140 and Thr170–Asn174 each bind ATP. Gly195–Gly198 contacts substrate. Asp197 (proton donor/acceptor) is an active-site residue. Residues Glu202, Gly239 to Thr241, Arg304, and Arg310 each bind ATP. Ser340 and Ser408 each carry phosphoserine. Asp502–Glu504 provides a ligand contact to ATP.

Ca(2+) serves as cofactor. The cofactor is Mg(2+). In terms of tissue distribution, high level expression in heart, brain, testis and pancreas; low expression in spleen, liver and lung; not detected in skeletal muscle.

It localises to the cytoplasm. The protein localises to the cell membrane. The enzyme catalyses an N-acylsphing-4-enine + ATP = an N-acylsphing-4-enine 1-phosphate + ADP + H(+). The catalysed reaction is N-(hexanoyl)sphing-4-enine + ATP = N-hexanoylsphing-4-enine 1-phosphate + ADP + H(+). It catalyses the reaction N-(acetyl)-sphing-4-enine + ATP = N-(acetyl)-sphing-4-enine-1-phosphate + ADP + H(+). It carries out the reaction N-hexadecanoylsphing-4-enine + ATP = N-(hexadecanoyl)-sphing-4-enine-1-phosphate + ADP + H(+). The enzyme catalyses N-hexanoyl-(4R)-hydroxysphinganine + ATP = N-hexanoyl-(4R)-hydroxysphinganine-1-phosphate + ADP + H(+). Functionally, catalyzes specifically the phosphorylation of ceramide to form ceramide 1-phosphate. Acts efficiently on natural and analog ceramides (C6, C8, C16 ceramides, and C8-dihydroceramide), to a lesser extent on C2-ceramide and C6-dihydroceramide, but not on other lipids, such as various sphingosines. Shows a greater preference for D-erythro isomer of ceramides. Binds phosphoinositides. The protein is Ceramide kinase (Cerk) of Mus musculus (Mouse).